A 115-amino-acid polypeptide reads, in one-letter code: NADH-ubiquinone oxidoreductase chain 3 (115 aa).

The next 3 helical transmembrane spans lie at 4-24 (LMVL…AFWL), 55-75 (FFLV…LLPL), and 84-104 (INIM…GLAY).

This sequence belongs to the complex I subunit 3 family. As to quaternary structure, core subunit of respiratory chain NADH dehydrogenase (Complex I) which is composed of 45 different subunits. Interacts with TMEM186. Interacts with TMEM242.

The protein resides in the mitochondrion membrane. It carries out the reaction a ubiquinone + NADH + 5 H(+)(in) = a ubiquinol + NAD(+) + 4 H(+)(out). In terms of biological role, core subunit of the mitochondrial membrane respiratory chain NADH dehydrogenase (Complex I) that is believed to belong to the minimal assembly required for catalysis. Complex I functions in the transfer of electrons from NADH to the respiratory chain. The immediate electron acceptor for the enzyme is believed to be ubiquinone. This Onychomys leucogaster (Northern grasshopper mouse) protein is NADH-ubiquinone oxidoreductase chain 3.